The primary structure comprises 295 residues: Fructose-bisphosphate aldolase class 1 (295 aa).

Glu-176 serves as the catalytic Proton acceptor. The active-site Schiff-base intermediate with dihydroxyacetone-P is Lys-213.

Belongs to the class I fructose-bisphosphate aldolase family.

The enzyme catalyses beta-D-fructose 1,6-bisphosphate = D-glyceraldehyde 3-phosphate + dihydroxyacetone phosphate. The protein operates within carbohydrate degradation; glycolysis; D-glyceraldehyde 3-phosphate and glycerone phosphate from D-glucose: step 4/4. This chain is Fructose-bisphosphate aldolase class 1, found in Treponema denticola (strain ATCC 35405 / DSM 14222 / CIP 103919 / JCM 8153 / KCTC 15104).